The following is a 123-amino-acid chain: uncharacterized protein (123 aa).

A disordered region spans residues 34 to 123 (PEKISQTVKK…MNRDGGVKKE (90 aa)). Basic and acidic residues-rich tracts occupy residues 50–60 (KKIDENKDKSP), 74–100 (TAKDAKDTDYQQKAKDAGKKIKEEFSQ), and 107–123 (EETRREGMNRDGGVKKE).

The protein localises to the mitochondrion. This is an uncharacterized protein from Schizosaccharomyces pombe (strain 972 / ATCC 24843) (Fission yeast).